Here is a 167-residue protein sequence, read N- to C-terminus: Small ribosomal subunit protein uS5 (167 aa).

The S5 DRBM domain occupies 12–75; sequence LREKLITINR…ERARGGMRTV (64 aa).

Belongs to the universal ribosomal protein uS5 family. As to quaternary structure, part of the 30S ribosomal subunit. Contacts proteins S4 and S8.

With S4 and S12 plays an important role in translational accuracy. In terms of biological role, located at the back of the 30S subunit body where it stabilizes the conformation of the head with respect to the body. This Halorhodospira halophila (strain DSM 244 / SL1) (Ectothiorhodospira halophila (strain DSM 244 / SL1)) protein is Small ribosomal subunit protein uS5.